Here is a 129-residue protein sequence, read N- to C-terminus: Histone H2A.J (129 aa).

The disordered stretch occupies residues 1–22 (MSGRGKQGGKVRAKAKSRSSRA). Ser-2 is subject to N-acetylserine. Position 2 is a phosphoserine (Ser-2). An N6-acetyllysine modification is found at Lys-6. Over residues 7 to 19 (QGGKVRAKAKSRS) the composition is skewed to basic residues. Lys-10 bears the N6-lactoyllysine; alternate mark. Glycyl lysine isopeptide (Lys-Gly) (interchain with G-Cter in ubiquitin) cross-links involve residues Lys-14 and Lys-16. An N5-methylglutamine modification is found at Gln-105. Lys-120 is covalently cross-linked (Glycyl lysine isopeptide (Lys-Gly) (interchain with G-Cter in ubiquitin)).

It belongs to the histone H2A family. The nucleosome is a histone octamer containing two molecules each of H2A, H2B, H3 and H4 assembled in one H3-H4 heterotetramer and two H2A-H2B heterodimers. The octamer wraps approximately 147 bp of DNA. Post-translationally, monoubiquitination of Lys-120 (H2AXK119ub) gives a specific tag for epigenetic transcriptional repression. Following DNA double-strand breaks (DSBs), it is ubiquitinated through 'Lys-63' linkage of ubiquitin moieties. In terms of processing, phosphorylation on Ser-2 is enhanced during mitosis. Phosphorylation on Ser-2 directly represses transcription.

The protein localises to the nucleus. It is found in the chromosome. In terms of biological role, core component of nucleosome. Nucleosomes wrap and compact DNA into chromatin, limiting DNA accessibility to the cellular machineries which require DNA as a template. Histones thereby play a central role in transcription regulation, DNA repair, DNA replication and chromosomal stability. DNA accessibility is regulated via a complex set of post-translational modifications of histones, also called histone code, and nucleosome remodeling. This chain is Histone H2A.J (H2A-IX), found in Gallus gallus (Chicken).